The sequence spans 87 residues: Small ribosomal subunit protein uS17 (87 aa).

The protein belongs to the universal ribosomal protein uS17 family. In terms of assembly, part of the 30S ribosomal subunit.

One of the primary rRNA binding proteins, it binds specifically to the 5'-end of 16S ribosomal RNA. This is Small ribosomal subunit protein uS17 from Heliobacterium modesticaldum (strain ATCC 51547 / Ice1).